The chain runs to 977 residues: SLIT and NTRK-like protein 3 (977 aa).

An N-terminal signal peptide occupies residues 1-26 (MKPSIAEMLHRGRMLWIILLSTIALG). The Extracellular segment spans residues 29–654 (TPIPLIEDSE…SPPGGPVPLS (626 aa)). Asparagine 68 carries an N-linked (GlcNAc...) asparagine glycan. LRR repeat units lie at residues 78-99 (RPFK…SFLH), 102-123 (NAVS…AFNG), 126-147 (ILKR…TFLG), 150-171 (SLEY…AFRN), 174-195 (KLRV…LFKA), and 197-218 (SLTH…GMLD). Residues 232–283 (NPWNCTCEIVQLKSWLERIPYTALVGDITCETPFHFHGKDLREIRKTELCPL) enclose the LRRCT 1 domain. The tract at residues 325–360 (EYKSSNKQPKPTKQPRTPRPPSTSQALYPGPNQPPI) is disordered. The LRRNT domain occupies 364–406 (QTRPPIPIICPTGCTCNLHINDLGLTVNCKERGFNNISELLPR). LRR repeat units lie at residues 409-430 (NAKK…DFWN), 433-454 (SLDL…AFIN), 457-478 (NLKS…MFRG), 481-502 (SLHY…AFSL), 505-526 (NLKL…AFAG), and 528-549 (SLAR…GVLE). Residues 562-613 (NPWDCTCDLVPFKQWIETISSVSVVGDVLCRSPENLTHRDVRTIELEVLCPE) form the LRRCT 2 domain. An N-linked (GlcNAc...) asparagine glycan is attached at asparagine 596. The chain crosses the membrane as a helical span at residues 655–675 (VLILSLLVLFFSAVFVAAGLF). Residues 676–977 (AYVLRRRRKK…EVLEKTTYRF (302 aa)) are Cytoplasmic-facing. Disordered regions lie at residues 708–735 (LFED…KAPP) and 761–790 (EEEV…MGEA). Residues 711-724 (DGGGGGGGSGGGGR) are compositionally biased toward gly residues. Residues 765–775 (AVSSAQEAGSA) show a composition bias toward low complexity.

This sequence belongs to the SLITRK family. Expressed in the occipital lobe of the cerebral cortex of the brain. Expressed at higher levels in some astrocytic brain tumors such as astrocytomas, oligodendrogliomas, glioblastomas, gangliogliomas and primitive neuroectodermal tumors.

The protein localises to the membrane. Its function is as follows. Suppresses neurite outgrowth. In Homo sapiens (Human), this protein is SLIT and NTRK-like protein 3 (SLITRK3).